A 120-amino-acid polypeptide reads, in one-letter code: NAD(P)H-quinone oxidoreductase subunit 3, chloroplastic (120 aa).

3 helical membrane passes run 9–29, 64–84, and 88–108; these read IFWA…LISG, MFAL…PWAM, and VLGV…ILGL.

This sequence belongs to the complex I subunit 3 family. NDH is composed of at least 16 different subunits, 5 of which are encoded in the nucleus.

The protein localises to the plastid. It is found in the chloroplast thylakoid membrane. The enzyme catalyses a plastoquinone + NADH + (n+1) H(+)(in) = a plastoquinol + NAD(+) + n H(+)(out). The catalysed reaction is a plastoquinone + NADPH + (n+1) H(+)(in) = a plastoquinol + NADP(+) + n H(+)(out). Its function is as follows. NDH shuttles electrons from NAD(P)H:plastoquinone, via FMN and iron-sulfur (Fe-S) centers, to quinones in the photosynthetic chain and possibly in a chloroplast respiratory chain. The immediate electron acceptor for the enzyme in this species is believed to be plastoquinone. Couples the redox reaction to proton translocation, and thus conserves the redox energy in a proton gradient. This is NAD(P)H-quinone oxidoreductase subunit 3, chloroplastic from Arabis hirsuta (Hairy rock-cress).